The chain runs to 82 residues: Turripeptide Gdm9.1 (82 aa).

The N-terminal stretch at 1–23 is a signal peptide; it reads MMAKLMITVMMVLLLSLQQGADG. Positions 24 to 46 are excised as a propeptide; that stretch reads RSERWRKNQMAASRIMRNLITAR. 4-hydroxyproline is present on residues P49 and P50. Cystine bridges form between C53–C68, C58–C72, and C64–C79. A 4-carboxyglutamate mark is found at E60 and E63.

The protein belongs to the Pg turripeptide superfamily. In terms of tissue distribution, expressed by the venom duct.

It localises to the secreted. The polypeptide is Turripeptide Gdm9.1 (Gemmula diomedea (Gem-turris)).